Here is a 600-residue protein sequence, read N- to C-terminus: ATP-dependent RNA helicase DDX55 (600 aa).

Residues 9 to 37 (WESLPVPLHPQVLGALRELGFPYMTPVQS) carry the Q motif motif. Positions 40-223 (IPLFMRNKDV…RAGLRNPVRV (184 aa)) constitute a Helicase ATP-binding domain. 53–60 (AVTGSGKT) serves as a coordination point for ATP. Positions 171–174 (DEAD) match the DEAD box motif. The region spanning 254-402 (KFNQLVHFLR…EMKPQRNTAD (149 aa)) is the Helicase C-terminal domain. Over residues 500-513 (EQQRREKTENEGRR) the composition is skewed to basic and acidic residues. A disordered region spans residues 500 to 550 (EQQRREKTENEGRRKFIKNKAWSKQKAKKEKKKKMNEKRKREEGSDIEDED). Residues 514-537 (KFIKNKAWSKQKAKKEKKKKMNEK) show a composition bias toward basic residues. Residues 533–562 (KMNEKRKREEGSDIEDEDMEELLNDTRLLK) form an important for nuclear localization region. A phosphoserine mark is found at S544 and S594.

Belongs to the DEAD box helicase family. DDX55/SPB4 subfamily. As to quaternary structure, interacts with 28S rRNA. Interacts with double-stranded RNA substrates in vitro; the interaction stimulates ATPase activity.

The protein localises to the nucleus. The protein resides in the nucleoplasm. It catalyses the reaction ATP + H2O = ADP + phosphate + H(+). In terms of biological role, probable ATP-binding RNA helicase. Has ATPase activity and is involved in the maturation of precursor large subunit rRNAs. The polypeptide is ATP-dependent RNA helicase DDX55 (Homo sapiens (Human)).